A 343-amino-acid chain; its full sequence is L-threonine 3-dehydrogenase (343 aa).

C40 is a binding site for Zn(2+). Residues T42 and H45 each act as charge relay system in the active site. Zn(2+) is bound by residues H65, E66, C95, C98, C101, and C109. Residues I177, D197, R202, 264–266 (LGI), and 288–289 (IY) contribute to the NAD(+) site.

Belongs to the zinc-containing alcohol dehydrogenase family. Homotetramer. Requires Zn(2+) as cofactor.

The protein localises to the cytoplasm. The enzyme catalyses L-threonine + NAD(+) = (2S)-2-amino-3-oxobutanoate + NADH + H(+). It functions in the pathway amino-acid degradation; L-threonine degradation via oxydo-reductase pathway; glycine from L-threonine: step 1/2. Catalyzes the NAD(+)-dependent oxidation of L-threonine to 2-amino-3-ketobutyrate. In Vibrio vulnificus (strain YJ016), this protein is L-threonine 3-dehydrogenase.